Consider the following 359-residue polypeptide: Chondroadherin (359 aa).

The N-terminal stretch at 1 to 22 is a signal peptide; the sequence is MVRPMLLLSLGLLAGLLPALAA. Cys23 and Cys38 form a disulfide bridge. Residues 23–52 enclose the LRRNT domain; it reads CPQNCHCHSDLQHVICDKVGLQKIPKVSEK. LRR repeat units lie at residues 76 to 97, 100 to 121, 124 to 145, 148 to 169, 172 to 193, 196 to 217, 220 to 241, 245 to 266, and 269 to 290; these read NLVS…AFRG, QLIY…AFDD, ELTY…LLSP, NLFI…AFQG, DLRW…ALDD, NLAK…ALSK, VVEE…AFQS, YLET…AFLG, and TLKH…FPFD. Ser144 carries O-linked (GalNAc...) serine glycosylation. The 49-residue stretch at 300–348 folds into the LRRCT domain; it reads NPWKCTCQLRGLRRWLEAKASRPDATCASPAKFKGQHIRDTDAFRSCKF. 2 disulfides stabilise this stretch: Cys304–Cys346 and Cys306–Cys326.

The protein belongs to the small leucine-rich proteoglycan (SLRP) family. SLRP class IV subfamily. In terms of assembly, mostly monomeric. Interacts with collagen type II. As to expression, present in chondrocytes at all ages.

It is found in the secreted. The protein localises to the extracellular space. Its subcellular location is the extracellular matrix. Its function is as follows. Promotes attachment of chondrocytes, fibroblasts, and osteoblasts. This binding is mediated (at least for chondrocytes and fibroblasts) by the integrin alpha(2)beta(1). May play an important role in the regulation of chondrocyte growth and proliferation. The protein is Chondroadherin (CHAD) of Homo sapiens (Human).